The following is a 251-amino-acid chain: MFPQIWGVIFLFTPTVFSELFKDPELLAGFYQGDIKAHPIRTRNGIVNQIYHWPNRTVPYMIEDDAFADSHYREILRAISIIEENSCVIFKPATEMDFPMALVITSKGLGCNTVHLGYRNKTQVVNLEIYPLGEGCFRIGSIIHELLHVLGFEHQHVSQNRDQYVSIQWKNINPQYNINFVNNDNSTAWHDFDEGYDYESVMHYVPRAFSRNGQPTIVPLREGAENMGQRFYMSEKDIRKLNKMYRCPDHV.

Residues M1–S18 form the signal peptide. Residues N44 to P248 form the Peptidase M12A domain. N55 and N120 each carry an N-linked (GlcNAc...) asparagine glycan. 2 disulfide bridges follow: C87-C247 and C111-C136. H144 serves as a coordination point for Zn(2+). Residue E145 is part of the active site. H148 and H154 together coordinate Zn(2+). N-linked (GlcNAc...) asparagine glycosylation is present at N185.

Zn(2+) is required as a cofactor. Undergoes cleavage in the male during mating with a cleaved product detected in the ejaculatory duct and/or bulb of males by 8-10 minutes after the start of mating. Further cleavage occurs in the mated female. May undergo cleavage in a two-step process where it is first cleaved by Sems, making it susceptible to activational cleavage which may be carried out by another protease or by autocleavage. As to expression, produced in the male accessory glands and secreted into seminal fluid. In mated females, confined to the reproductive tract and also detected in eggs laid by mated females (at protein level).

It is found in the secreted. Seminal fluid metalloprotease which is transferred to females during mating and is required for processing of two other seminal fluid proteins Acp26Aa and Acp36DE in mated females. This is Seminal metalloprotease 1 from Drosophila melanogaster (Fruit fly).